Here is a 101-residue protein sequence, read N- to C-terminus: Urease subunit beta (101 aa).

It belongs to the urease beta subunit family. Heterotrimer of UreA (gamma), UreB (beta) and UreC (alpha) subunits. Three heterotrimers associate to form the active enzyme.

The protein localises to the cytoplasm. The catalysed reaction is urea + 2 H2O + H(+) = hydrogencarbonate + 2 NH4(+). It functions in the pathway nitrogen metabolism; urea degradation; CO(2) and NH(3) from urea (urease route): step 1/1. This is Urease subunit beta from Azotobacter vinelandii (strain DJ / ATCC BAA-1303).